We begin with the raw amino-acid sequence, 1258 residues long: Splicing factor, arginine/serine-rich 19 (1258 aa).

Disordered regions lie at residues 1-32 (MEEE…LSPS), 159-345 (KTVS…PRRR), 370-398 (GGPA…EEEP), 410-1034 (PRQP…PPPM), 1114-1154 (GSLP…DKYL), and 1223-1258 (FRKH…LPPL). Over residues 7–27 (SRGKTEESGEDRGDGPPDRDP) the composition is skewed to basic and acidic residues. Low complexity predominate over residues 193–207 (SSASSSPSPSPSSSS). Residues 208-223 (PSPPPPPPPPPPPALP) are compositionally biased toward pro residues. Positions 228–237 (DIYDPFHPTD) are enriched in basic and acidic residues. S241 carries the phosphoserine modification. Polar residues predominate over residues 256 to 266 (TGSNPSSSAGT). Acidic residues predominate over residues 269–283 (PEEEEEEEEEEEEEG). T329 carries the post-translational modification Phosphothreonine. Over residues 374-383 (LPLPPLPPTD) the composition is skewed to pro residues. The span at 384 to 395 (PEIEEGEIVQPE) shows a compositional bias: acidic residues. Residues 414–426 (PASVATLASVAAP) show a composition bias toward low complexity. S444 and S449 each carry phosphoserine. Basic residues predominate over residues 480-491 (KILTQRRERYRQ). Phosphoserine occurs at positions 493, 495, 512, and 520. Composition is skewed to basic residues over residues 540-555 (TARR…RSRS) and 562-579 (RGSH…RRRS). S579 and S581 each carry phosphoserine. Residues 594-613 (RERHRGKRREGGKKKKKRSR) are compositionally biased toward basic residues. The segment covering 614 to 625 (SRAEKRSGDLEK) has biased composition (basic and acidic residues). T665 is modified (phosphothreonine). A phosphoserine mark is found at S678 and S684. The residue at position 691 (Y691) is a Phosphotyrosine. 2 positions are modified to phosphoserine: S693 and S697. Composition is skewed to basic and acidic residues over residues 698–711 (ADER…DRRR) and 721–743 (SREK…DRSS). Low complexity-rich tracts occupy residues 752 to 777 (SAPG…SCSS) and 795 to 806 (SSTTPAKDSSSS). K814 participates in a covalent cross-link: Glycyl lysine isopeptide (Lys-Gly) (interchain with G-Cter in SUMO2). Residues 815–833 (FSRDRESRSPFLKPDERAP) are compositionally biased toward basic and acidic residues. Residues S821 and S823 each carry the phosphoserine modification. Over residues 845-877 (KPKKTKAKAKAGAKKAKGTKGKTKPSKTRKKVR) the composition is skewed to basic residues. 4 positions are modified to phosphoserine: S878, S885, S912, and S914. Pro residues predominate over residues 924-937 (STPPPKVAPPPPAL). Residues T925 and T938 each carry the phosphothreonine modification. Residues 940 to 949 (DSQTVDSSCK) show a composition bias toward polar residues. S941 is modified (phosphoserine). T950 bears the Phosphothreonine mark. Acidic residues predominate over residues 971–986 (EEEEEEEEEEEEEEEQ). Over residues 987–1019 (QPATTTATSTAAAAPSTAPSAGSTAGDSGAEDG) the composition is skewed to low complexity. The necessary for interaction with the CTD domain of POLR2A stretch occupies residues 1133–1258 (PASDKREGSS…GGPGLPLPPL (126 aa)). Residues 1135-1154 (SDKREGSSSSEGRGDTDKYL) are compositionally biased toward basic and acidic residues. Residues 1246 to 1258 (PDKGGPGLPLPPL) show a composition bias toward pro residues.

Belongs to the splicing factor SR family. As to quaternary structure, interacts with POLR2A.

The protein resides in the nucleus. Functionally, may function in pre-mRNA splicing. The sequence is that of Splicing factor, arginine/serine-rich 19 (Scaf1) from Rattus norvegicus (Rat).